The sequence spans 345 residues: Tropomodulin-4 (345 aa).

2 disordered regions span residues 40-64 and 326-345; these read PENM…GPLD and ARAA…QKKR. Residues 336–345 are compositionally biased toward basic and acidic residues; the sequence is NELRRQQKKR.

It belongs to the tropomodulin family. In terms of assembly, binds to the N-terminus of tropomyosin and to actin.

The protein resides in the cytoplasm. It is found in the cytoskeleton. Blocks the elongation and depolymerization of the actin filaments at the pointed end. The Tmod/TM complex contributes to the formation of the short actin protofilament, which in turn defines the geometry of the membrane skeleton. The chain is Tropomodulin-4 (Tmod4) from Mus musculus (Mouse).